The primary structure comprises 637 residues: Phosphomethylpyrimidine synthase (637 aa).

Substrate contacts are provided by residues Asn-242, Met-271, Tyr-300, His-336, 356–358 (SRG), 397–400 (DGLR), and Glu-436. His-440 serves as a coordination point for Zn(2+). Tyr-463 contributes to the substrate binding site. Residue His-504 participates in Zn(2+) binding. The [4Fe-4S] cluster site is built by Cys-584, Cys-587, and Cys-592.

It belongs to the ThiC family. As to quaternary structure, homodimer. [4Fe-4S] cluster is required as a cofactor.

The catalysed reaction is 5-amino-1-(5-phospho-beta-D-ribosyl)imidazole + S-adenosyl-L-methionine = 4-amino-2-methyl-5-(phosphooxymethyl)pyrimidine + CO + 5'-deoxyadenosine + formate + L-methionine + 3 H(+). It participates in cofactor biosynthesis; thiamine diphosphate biosynthesis. In terms of biological role, catalyzes the synthesis of the hydroxymethylpyrimidine phosphate (HMP-P) moiety of thiamine from aminoimidazole ribotide (AIR) in a radical S-adenosyl-L-methionine (SAM)-dependent reaction. The protein is Phosphomethylpyrimidine synthase of Bordetella avium (strain 197N).